We begin with the raw amino-acid sequence, 358 residues long: Trace amine-associated receptor 7a (358 aa).

Residues Met-1–Arg-47 lie on the Extracellular side of the membrane. Asn-34 is a glycosylation site (N-linked (GlcNAc...) asparagine). 2 disulfides stabilise this stretch: Cys-37–Cys-201 and Cys-120–Cys-205. A helical membrane pass occupies residues Leu-48 to Val-68. The Cytoplasmic portion of the chain corresponds to Met-69–Asn-83. A helical transmembrane segment spans residues Phe-84 to Ser-104. The Extracellular portion of the chain corresponds to Thr-105–Lys-121. A helical transmembrane segment spans residues Phe-122 to Val-143. Residues Asp-144 to Lys-166 are Cytoplasmic-facing. The helical transmembrane segment at Cys-167–Ala-187 threads the bilayer. Over Asn-188–Ser-212 the chain is Extracellular. N-linked (GlcNAc...) asparagine glycosylation occurs at Asn-210. The chain crosses the membrane as a helical span at residues Trp-213–Ser-233. The Cytoplasmic portion of the chain corresponds to Lys-234–Thr-274. A helical membrane pass occupies residues Leu-275–Ile-295. At Asp-296–Glu-309 the chain is on the extracellular side. The helical transmembrane segment at Ile-310–Phe-333 threads the bilayer. The Cytoplasmic portion of the chain corresponds to Arg-334 to Glu-358.

This sequence belongs to the G-protein coupled receptor 1 family. As to expression, specifically expressed in neurons of the olfactory epithelium.

Its subcellular location is the cell membrane. Functionally, olfactory receptor specific for N,N-dimethylalkylamines trace amines. Trace amine compounds are enriched in animal body fluids and act on trace amine-associated receptors (TAARs) to elicit both intraspecific and interspecific innate behaviors. Ligand-binding causes a conformation change that triggers signaling via G(s)-class of G alpha proteins (GNAL or GNAS). This is Trace amine-associated receptor 7a from Mus musculus (Mouse).